The sequence spans 480 residues: GTPase Obg (480 aa).

The 158-residue stretch at 2-159 folds into the Obg domain; sequence TRFIDRVVIH…RDLTLELKTV (158 aa). In terms of domain architecture, OBG-type G spans 160 to 341; it reads ADVGLVGFPS…LTFALWDMVA (182 aa). GTP-binding positions include 166 to 173, 191 to 195, 212 to 215, 292 to 295, and 322 to 324; these read GFPSAGKS, FTTLA, DVPG, NKID, and STV. Serine 173 and threonine 193 together coordinate Mg(2+). An OCT domain is found at 359–437; it reads PIPVDETAFS…IGDMTFDWEP (79 aa). The segment at 441–480 is disordered; sequence AGVDVPLTGRGTDVRLEQTDRVGADERKAARKARRQSGDE. Basic and acidic residues predominate over residues 452–468; that stretch reads TDVRLEQTDRVGADERK. Residues 469–480 show a composition bias toward basic residues; the sequence is AARKARRQSGDE.

The protein belongs to the TRAFAC class OBG-HflX-like GTPase superfamily. OBG GTPase family. As to quaternary structure, monomer. Mg(2+) serves as cofactor.

It localises to the cytoplasm. Its function is as follows. An essential GTPase which binds GTP, GDP and possibly (p)ppGpp with moderate affinity, with high nucleotide exchange rates and a fairly low GTP hydrolysis rate. Plays a role in control of the cell cycle, stress response, ribosome biogenesis and in those bacteria that undergo differentiation, in morphogenesis control. The chain is GTPase Obg from Mycolicibacterium vanbaalenii (strain DSM 7251 / JCM 13017 / BCRC 16820 / KCTC 9966 / NRRL B-24157 / PYR-1) (Mycobacterium vanbaalenii).